The chain runs to 231 residues: 7-cyano-7-deazaguanine synthase (231 aa).

8–18 (FSGGQDSTTCL) contributes to the ATP binding site. 4 residues coordinate Zn(2+): Cys188, Cys197, Cys200, and Cys203.

It belongs to the QueC family. The cofactor is Zn(2+).

The catalysed reaction is 7-carboxy-7-deazaguanine + NH4(+) + ATP = 7-cyano-7-deazaguanine + ADP + phosphate + H2O + H(+). It functions in the pathway purine metabolism; 7-cyano-7-deazaguanine biosynthesis. Its function is as follows. Catalyzes the ATP-dependent conversion of 7-carboxy-7-deazaguanine (CDG) to 7-cyano-7-deazaguanine (preQ(0)). The sequence is that of 7-cyano-7-deazaguanine synthase from Erwinia tasmaniensis (strain DSM 17950 / CFBP 7177 / CIP 109463 / NCPPB 4357 / Et1/99).